The chain runs to 640 residues: uncharacterized protein (640 aa).

The interval 594–614 (QCSSDHCKPGSSETLPEATNE) is disordered.

This is an uncharacterized protein from Rattus norvegicus (Rat).